Consider the following 168-residue polypeptide: MIIFYLSGDRVFSTDQNAINGLYNKRYFGKVVEGKLFLSLLEAAYLVERGKIEVRDGKRKLSLEEIMNLGRARDELFDAKYLVYKDLRDRGYTVKSGLKFGSHFRVYRRGMEEHSEWLVWVVPENSRLSPNDITARVRVAHGVRKNMIMAIVDEDADVTYYKVEWVKF.

Catalysis depends on residues Y107, H114, and K145.

Belongs to the tRNA-intron endonuclease family. Archaeal short subfamily. In terms of assembly, homotetramer; although the tetramer contains four active sites, only two participate in the cleavage. Therefore, it should be considered as a dimer of dimers.

The catalysed reaction is pretRNA = a 3'-half-tRNA molecule with a 5'-OH end + a 5'-half-tRNA molecule with a 2',3'-cyclic phosphate end + an intron with a 2',3'-cyclic phosphate and a 5'-hydroxyl terminus.. Endonuclease that removes tRNA introns. Cleaves pre-tRNA at the 5'- and 3'-splice sites to release the intron. The products are an intron and two tRNA half-molecules bearing 2',3' cyclic phosphate and 5'-OH termini. Recognizes a pseudosymmetric substrate in which 2 bulged loops of 3 bases are separated by a stem of 4 bp. This is tRNA-splicing endonuclease from Thermococcus kodakarensis (strain ATCC BAA-918 / JCM 12380 / KOD1) (Pyrococcus kodakaraensis (strain KOD1)).